Reading from the N-terminus, the 259-residue chain is Imidazole glycerol phosphate synthase subunit HisF (259 aa).

Active-site residues include D11 and D130.

The protein belongs to the HisA/HisF family. As to quaternary structure, heterodimer of HisH and HisF.

It is found in the cytoplasm. The catalysed reaction is 5-[(5-phospho-1-deoxy-D-ribulos-1-ylimino)methylamino]-1-(5-phospho-beta-D-ribosyl)imidazole-4-carboxamide + L-glutamine = D-erythro-1-(imidazol-4-yl)glycerol 3-phosphate + 5-amino-1-(5-phospho-beta-D-ribosyl)imidazole-4-carboxamide + L-glutamate + H(+). It participates in amino-acid biosynthesis; L-histidine biosynthesis; L-histidine from 5-phospho-alpha-D-ribose 1-diphosphate: step 5/9. In terms of biological role, IGPS catalyzes the conversion of PRFAR and glutamine to IGP, AICAR and glutamate. The HisF subunit catalyzes the cyclization activity that produces IGP and AICAR from PRFAR using the ammonia provided by the HisH subunit. The polypeptide is Imidazole glycerol phosphate synthase subunit HisF (Syntrophobacter fumaroxidans (strain DSM 10017 / MPOB)).